Here is a 232-residue protein sequence, read N- to C-terminus: Large ribosomal subunit protein uL1 (232 aa).

The protein belongs to the universal ribosomal protein uL1 family. In terms of assembly, part of the 50S ribosomal subunit.

In terms of biological role, binds directly to 23S rRNA. The L1 stalk is quite mobile in the ribosome, and is involved in E site tRNA release. Protein L1 is also a translational repressor protein, it controls the translation of the L11 operon by binding to its mRNA. This chain is Large ribosomal subunit protein uL1, found in Cutibacterium acnes (strain DSM 16379 / KPA171202) (Propionibacterium acnes).